The primary structure comprises 108 residues: DNA-binding protein HBbu (108 aa).

The protein belongs to the bacterial histone-like protein family.

Histone-like DNA-binding protein which is capable of wrapping DNA to stabilize it, and thus to prevent its denaturation under extreme environmental conditions. This chain is DNA-binding protein HBbu (hbb), found in Borrelia turicatae.